We begin with the raw amino-acid sequence, 729 residues long: Sodium-dependent neutral amino acid transporter B(0)AT2 (729 aa).

The Cytoplasmic portion of the chain corresponds to Met-1 to Gln-69. A phosphoserine mark is found at Ser-25 and Ser-55. The next 3 membrane-spanning stretches (helical) occupy residues Tyr-70–Leu-90, Ala-98–Leu-117, and Gly-142–Ile-162. Topologically, residues Gly-163–Asn-225 are extracellular. The N-linked (GlcNAc...) asparagine glycan is linked to Asn-187. The next 4 membrane-spanning stretches (helical) occupy residues Trp-226 to Ile-244, Ile-253 to Ile-270, Val-306 to Tyr-323, and Val-335 to Leu-356. Residues Gly-357 to His-452 are Extracellular-facing. 2 N-linked (GlcNAc...) asparagine glycosylation sites follow: Asn-383 and Asn-394. 5 helical membrane passes run Phe-453–Leu-472, Ile-496–Gln-514, Thr-530–Ile-550, Tyr-571–Met-592, and Val-620–Cys-642. At Asn-643 to Leu-729 the chain is on the cytoplasmic side. Residues Ser-687, Ser-699, and Ser-701 each carry the phosphoserine modification.

It belongs to the sodium:neurotransmitter symporter (SNF) (TC 2.A.22) family. SLC6A15 subfamily. As to expression, widely distributed in the central nervous system, including the olfactory bulb, the hypothalamus, the cerebral cortex, the hippocampus, and the cerebellum. In addition, intense expression is found in the motor nuclei including the oculomotor nucleus, abducens nucleus, trigeminal motor nucleus, facial nucleus, hypoglossal nucleus and ventral horn of spinal cord. Intense hybridization signals are also observed in the nuclei containing monoaminergic neurons, such as locus coeruleus, the substantia nigra pars compacta, the ventral tegmental area, the dorsal raphe nucleus and the median raphe nucleus.

Its subcellular location is the membrane. It catalyses the reaction L-leucine(in) + Na(+)(in) = L-leucine(out) + Na(+)(out). It carries out the reaction L-isoleucine(in) + Na(+)(in) = L-isoleucine(out) + Na(+)(out). The catalysed reaction is L-methionine(in) + Na(+)(in) = L-methionine(out) + Na(+)(out). The enzyme catalyses L-proline(in) + Na(+)(in) = L-proline(out) + Na(+)(out). It catalyses the reaction L-alanine(in) + Na(+)(in) = L-alanine(out) + Na(+)(out). It carries out the reaction L-asparagine(in) + Na(+)(in) = L-asparagine(out) + Na(+)(out). The catalysed reaction is L-valine(in) + Na(+)(in) = L-valine(out) + Na(+)(out). The enzyme catalyses L-cysteine(in) + Na(+)(in) = L-cysteine(out) + Na(+)(out). It catalyses the reaction L-glutamine(in) + Na(+)(in) = L-glutamine(out) + Na(+)(out). It carries out the reaction L-serine(in) + Na(+)(in) = L-serine(out) + Na(+)(out). The catalysed reaction is L-threonine(in) + Na(+)(in) = L-threonine(out) + Na(+)(out). The enzyme catalyses L-pipecolate(in) + Na(+)(in) = L-pipecolate(out) + Na(+)(out). It catalyses the reaction L-phenylalanine(in) + Na(+)(in) = L-phenylalanine(out) + Na(+)(out). Functionally, functions as a sodium-dependent neutral amino acid transporter. Exhibits preference for the branched-chain amino acids, particularly leucine, valine and isoleucine and methionine. Can also transport low-affinity substrates such as alanine, phenylalanine, glutamine and pipecolic acid. Mediates the saturable, pH-sensitive and electrogenic cotransport of proline and sodium ions with a stoichiometry of 1:1. May have a role as transporter for neurotransmitter precursors into neurons. In contrast to other members of the neurotransmitter transporter family, does not appear to be chloride-dependent. The chain is Sodium-dependent neutral amino acid transporter B(0)AT2 (Slc6a15) from Rattus norvegicus (Rat).